Reading from the N-terminus, the 70-residue chain is Toxin Boma6d (70 aa).

The LCN-type CS-alpha/beta domain occupies 2 to 68 (RDAYIAQNYN…VPIKVEGKCH (67 aa)). Disulfide bonds link cysteine 12-cysteine 67, cysteine 16-cysteine 40, cysteine 22-cysteine 50, and cysteine 26-cysteine 52.

This sequence belongs to the long (4 C-C) scorpion toxin superfamily. Sodium channel inhibitor family. Alpha subfamily. Expressed by the venom gland.

The protein resides in the secreted. Its function is as follows. Alpha toxins bind voltage-independently at site-3 of sodium channels (Nav) and inhibit the inactivation of the activated channels, thereby blocking neuronal transmission. The polypeptide is Toxin Boma6d (Buthus occitanus mardochei (Moroccan scorpion)).